A 430-amino-acid polypeptide reads, in one-letter code: UPF0597 protein CV_1824 (430 aa).

The protein belongs to the UPF0597 family.

The chain is UPF0597 protein CV_1824 from Chromobacterium violaceum (strain ATCC 12472 / DSM 30191 / JCM 1249 / CCUG 213 / NBRC 12614 / NCIMB 9131 / NCTC 9757 / MK).